The following is a 123-amino-acid chain: ALWQFNGMIKCKIPSSEPLLDFNNYGCYCGLGGSGTPVDDLDRCCQTHDNCYKQAKKLDSCKVLVDNPYTNSYSYSCSNKQITCSSENNACEAFICNCDRNAAICFSEVPYNNEHKNLDKKYC.

7 cysteine pairs are disulfide-bonded: C11–C77, C27–C123, C29–C45, C44–C105, C51–C98, C61–C91, and C84–C96. Residues Y28, G30, and G32 each contribute to the Ca(2+) site. The active site involves H48. D49 is a Ca(2+) binding site. The active site involves D99.

This sequence belongs to the phospholipase A2 family. Monomer or homodimer. Requires Ca(2+) as cofactor. In terms of processing, activated by trypsin cleavage in the duodenum. Can also be activated by thrombin or autocatalytically.

It localises to the secreted. It catalyses the reaction a 1,2-diacyl-sn-glycero-3-phosphocholine + H2O = a 1-acyl-sn-glycero-3-phosphocholine + a fatty acid + H(+). It carries out the reaction 1,2-ditetradecanoyl-sn-glycero-3-phosphocholine + H2O = 1-tetradecanoyl-sn-glycero-3-phosphocholine + tetradecanoate + H(+). The enzyme catalyses 1,2-dihexadecanoyl-sn-glycero-3-phosphocholine + H2O = 1-hexadecanoyl-sn-glycero-3-phosphocholine + hexadecanoate + H(+). The catalysed reaction is 1-hexadecanoyl-2-(9Z-octadecenoyl)-sn-glycero-3-phosphocholine + H2O = 1-hexadecanoyl-sn-glycero-3-phosphocholine + (9Z)-octadecenoate + H(+). It catalyses the reaction 1-hexadecanoyl-2-(5Z,8Z,11Z,14Z-eicosatetraenoyl)-sn-glycero-3-phosphocholine + H2O = 1-hexadecanoyl-sn-glycero-3-phosphocholine + (5Z,8Z,11Z,14Z)-eicosatetraenoate + H(+). It carries out the reaction 1-hexadecanoyl-2-(9Z-octadecenoyl)-sn-glycero-3-phospho-(1'-sn-glycerol) + H2O = 1-hexadecanoyl-sn-glycero-3-phospho-(1'-sn-glycerol) + (9Z)-octadecenoate + H(+). The enzyme catalyses N-hexadecanoyl-1,2-di-(9Z-octadecenoyl)-sn-glycero-3-phosphoethanolamine + H2O = N-hexadecanoyl-1-(9Z-octadecenoyl)-sn-glycero-3-phosphoethanolamine + (9Z)-octadecenoate + H(+). The catalysed reaction is 1-hexadecanoyl-2-(9Z,12Z-octadecadienoyl)-sn-glycero-3-phosphoethanolamine + H2O = 1-hexadecanoyl-sn-glycero-3-phosphoethanolamine + (9Z,12Z)-octadecadienoate + H(+). It catalyses the reaction N,1-dihexadecanoyl-2-(9Z,12Z-octadecadienoyl)-sn-glycero-3-phosphoethanolamine + H2O = N,1-dihexadecanoyl-sn-glycero-3-phosphoethanolamine + (9Z,12Z)-octadecadienoate + H(+). Functionally, secretory calcium-dependent phospholipase A2 that primarily targets dietary phospholipids in the intestinal tract. Hydrolyzes the ester bond of the fatty acyl group attached at sn-2 position of phospholipids (phospholipase A2 activity) with preference for phosphatidylethanolamines and phosphatidylglycerols over phosphatidylcholines. May play a role in the biosynthesis of N-acyl ethanolamines that regulate energy metabolism and inflammation in the intestinal tract. Hydrolyzes N-acyl phosphatidylethanolamines to N-acyl lysophosphatidylethanolamines, which are further cleaved by a lysophospholipase D to release N-acyl ethanolamines. May act in an autocrine and paracrine manner. Has anti-helminth activity in a process regulated by gut microbiota. Upon helminth infection of intestinal epithelia, directly affects phosphatidylethanolamine contents in the membrane of helminth larvae, likely controlling an array of phospholipid-mediated cellular processes such as membrane fusion and cell division while providing for better immune recognition, ultimately reducing larvae integrity and infectivity. The sequence is that of Phospholipase A2 (PLA2G1B) from Ovis aries (Sheep).